The primary structure comprises 55 residues: Spermatid nuclear transition protein 1 (55 aa).

Residues 1-42 are compositionally biased toward basic residues; sequence MSTSRKLKSQGMRRGKNRTPHKGVKRSGSKRKYRKSSLKSRK. Positions 1 to 55 are disordered; that stretch reads MSTSRKLKSQGMRRGKNRTPHKGVKRSGSKRKYRKSSLKSRKRCDDANRNLRSHL. Serine 9, serine 36, serine 37, and serine 40 each carry phosphoserine.

Belongs to the nuclear transition protein 1 family. In terms of tissue distribution, testis.

It is found in the nucleus. It localises to the chromosome. In terms of biological role, plays a key role in the replacement of histones to protamine in the elongating spermatids of mammals. In condensing spermatids, loaded onto the nucleosomes, where it promotes the recruitment and processing of protamines, which are responsible for histone eviction. The sequence is that of Spermatid nuclear transition protein 1 (TNP1) from Bos taurus (Bovine).